A 181-amino-acid chain; its full sequence is uncharacterized protein (181 aa).

Residues 151-181 form a disordered region; the sequence is AQKKKDFQEPENKHEQLTSTKAPCQENWSDF. Residues 154–166 show a composition bias toward basic and acidic residues; the sequence is KKDFQEPENKHEQ. Over residues 167-181 the composition is skewed to polar residues; that stretch reads LTSTKAPCQENWSDF.

This is an uncharacterized protein from Caenorhabditis elegans.